A 286-amino-acid polypeptide reads, in one-letter code: NAD kinase (286 aa).

Aspartate 74 serves as the catalytic Proton acceptor. Residues 74-75 (DG), 148-149 (ND), aspartate 178, alanine 186, 189-194 (TAYNLS), and glutamine 244 contribute to the NAD(+) site.

Belongs to the NAD kinase family. It depends on a divalent metal cation as a cofactor.

It is found in the cytoplasm. It carries out the reaction NAD(+) + ATP = ADP + NADP(+) + H(+). In terms of biological role, involved in the regulation of the intracellular balance of NAD and NADP, and is a key enzyme in the biosynthesis of NADP. Catalyzes specifically the phosphorylation on 2'-hydroxyl of the adenosine moiety of NAD to yield NADP. The protein is NAD kinase of Campylobacter jejuni subsp. jejuni serotype O:2 (strain ATCC 700819 / NCTC 11168).